A 348-amino-acid chain; its full sequence is Anthranilate phosphoribosyltransferase (348 aa).

Residues glycine 89, 92 to 93 (GD), threonine 97, 99 to 102 (NIST), 117 to 125 (KHGNRSVSS), and serine 129 contribute to the 5-phospho-alpha-D-ribose 1-diphosphate site. Glycine 89 serves as a coordination point for anthranilate. Serine 101 is a Mg(2+) binding site. Asparagine 120 is an anthranilate binding site. Arginine 175 is an anthranilate binding site. Positions 233 and 234 each coordinate Mg(2+).

The protein belongs to the anthranilate phosphoribosyltransferase family. As to quaternary structure, homodimer. Requires Mg(2+) as cofactor.

It catalyses the reaction N-(5-phospho-beta-D-ribosyl)anthranilate + diphosphate = 5-phospho-alpha-D-ribose 1-diphosphate + anthranilate. It participates in amino-acid biosynthesis; L-tryptophan biosynthesis; L-tryptophan from chorismate: step 2/5. Its function is as follows. Catalyzes the transfer of the phosphoribosyl group of 5-phosphorylribose-1-pyrophosphate (PRPP) to anthranilate to yield N-(5'-phosphoribosyl)-anthranilate (PRA). This chain is Anthranilate phosphoribosyltransferase, found in Shewanella sp. (strain W3-18-1).